Reading from the N-terminus, the 73-residue chain is UPF0154 protein BCG9842_B1526 (73 aa).

Residues 3 to 23 form a helical membrane-spanning segment; that stretch reads IWLGILVGVVALVAGVALGFF.

Belongs to the UPF0154 family.

The protein localises to the cell membrane. This is UPF0154 protein BCG9842_B1526 from Bacillus cereus (strain G9842).